A 127-amino-acid polypeptide reads, in one-letter code: Large ribosomal subunit protein eL22x (127 aa).

Belongs to the eukaryotic ribosomal protein eL22 family.

This Arabidopsis thaliana (Mouse-ear cress) protein is Large ribosomal subunit protein eL22x (RPL22A).